Reading from the N-terminus, the 179-residue chain is Large ribosomal subunit protein uL5 (179 aa).

This sequence belongs to the universal ribosomal protein uL5 family. In terms of assembly, part of the 50S ribosomal subunit; part of the 5S rRNA/L5/L18/L25 subcomplex. Contacts the 5S rRNA and the P site tRNA. Forms a bridge to the 30S subunit in the 70S ribosome.

Its function is as follows. This is one of the proteins that bind and probably mediate the attachment of the 5S RNA into the large ribosomal subunit, where it forms part of the central protuberance. In the 70S ribosome it contacts protein S13 of the 30S subunit (bridge B1b), connecting the 2 subunits; this bridge is implicated in subunit movement. Contacts the P site tRNA; the 5S rRNA and some of its associated proteins might help stabilize positioning of ribosome-bound tRNAs. The sequence is that of Large ribosomal subunit protein uL5 from Pectobacterium atrosepticum (strain SCRI 1043 / ATCC BAA-672) (Erwinia carotovora subsp. atroseptica).